The primary structure comprises 186 residues: PRA1 family protein G2 (186 aa).

The next 4 membrane-spanning stretches (helical) occupy residues 66 to 86 (YFFV…LITA), 87 to 107 (SPVA…FHFF), 119 to 139 (VGDR…IWFT), and 142 to 162 (AVNL…HAVF).

This sequence belongs to the PRA1 family. As to expression, expressed in roots and trichomes.

The protein resides in the endoplasmic reticulum membrane. May be involved in both secretory and endocytic intracellular trafficking in the endosomal/prevacuolar compartments. The sequence is that of PRA1 family protein G2 (PRA1G2) from Arabidopsis thaliana (Mouse-ear cress).